The chain runs to 120 residues: Anti-adapter protein IraM (120 aa).

The protein belongs to the IraM/RssC family.

The protein localises to the cytoplasm. In terms of biological role, involved in the stabilization of the sigma stress factor RpoS. This Salmonella typhimurium (strain LT2 / SGSC1412 / ATCC 700720) protein is Anti-adapter protein IraM.